Here is a 298-residue protein sequence, read N- to C-terminus: ATP phosphoribosyltransferase (298 aa).

It belongs to the ATP phosphoribosyltransferase family.

The protein resides in the cytoplasm. The catalysed reaction is 1-(5-phospho-beta-D-ribosyl)-ATP + diphosphate = 5-phospho-alpha-D-ribose 1-diphosphate + ATP. It functions in the pathway amino-acid biosynthesis; L-histidine biosynthesis; L-histidine from 5-phospho-alpha-D-ribose 1-diphosphate: step 1/9. Functionally, catalyzes the condensation of ATP and 5-phosphoribose 1-diphosphate to form N'-(5'-phosphoribosyl)-ATP (PR-ATP). Has a crucial role in the pathway because the rate of histidine biosynthesis seems to be controlled primarily by regulation of the enzymatic activity. This Candida albicans (strain SC5314 / ATCC MYA-2876) (Yeast) protein is ATP phosphoribosyltransferase (HIS1).